The chain runs to 480 residues: Protein nucleotidyltransferase YdiU (480 aa).

8 residues coordinate ATP: glycine 86, glycine 88, arginine 89, lysine 109, aspartate 121, glycine 122, arginine 172, and arginine 179. Aspartate 248 functions as the Proton acceptor in the catalytic mechanism. The Mg(2+) site is built by asparagine 249 and aspartate 258. Aspartate 258 serves as a coordination point for ATP.

It belongs to the SELO family. It depends on Mg(2+) as a cofactor. The cofactor is Mn(2+).

It carries out the reaction L-seryl-[protein] + ATP = 3-O-(5'-adenylyl)-L-seryl-[protein] + diphosphate. It catalyses the reaction L-threonyl-[protein] + ATP = 3-O-(5'-adenylyl)-L-threonyl-[protein] + diphosphate. The catalysed reaction is L-tyrosyl-[protein] + ATP = O-(5'-adenylyl)-L-tyrosyl-[protein] + diphosphate. The enzyme catalyses L-histidyl-[protein] + UTP = N(tele)-(5'-uridylyl)-L-histidyl-[protein] + diphosphate. It carries out the reaction L-seryl-[protein] + UTP = O-(5'-uridylyl)-L-seryl-[protein] + diphosphate. It catalyses the reaction L-tyrosyl-[protein] + UTP = O-(5'-uridylyl)-L-tyrosyl-[protein] + diphosphate. In terms of biological role, nucleotidyltransferase involved in the post-translational modification of proteins. It can catalyze the addition of adenosine monophosphate (AMP) or uridine monophosphate (UMP) to a protein, resulting in modifications known as AMPylation and UMPylation. This Salmonella enteritidis PT4 (strain P125109) protein is Protein nucleotidyltransferase YdiU.